The chain runs to 456 residues: MLNNAMSVVILAAGKGTRMYSDLPKVLHTLAGKAMVQHVIDAANELGAAHVHLVYGHGGDLLKQALKDDNLNWVLQAEQLGTGHAMQQAAPFFADDEDILMLYGDVPLISVETLQRLRDAKPQGGIGLLTVKLDDPTGYGRITRENGKVTGIVEHKDATDEQRQIQEINTGILISNGADMKRWLAKLTNNNAQGEYYITDIIALAYQEGREIVAVHPQRLSEVEGVNNRLQLSRLERVYQSEQAEKLLLAGVMLRDPARFDLRGTLTHGRDVEIDTNVIIEGNVTLGHRVKIGTGCVIKNSVIGDDCEISPYTVVEDVNLAAACTIGPFARLRPGAELLEGAHVGNFVEMKKARLGKGSKAGHLTYLGDAEIGDNVNIGAGTITCNYDGANKFKTIIGDDVFVGSDTQLVAPVTVGKGATIAAGTTVTRNVGENALAISRVPQTQKEGWRRPVKKK.

Residues 1-229 (MLNNAMSVVI…LSEVEGVNNR (229 aa)) are pyrophosphorylase. UDP-N-acetyl-alpha-D-glucosamine contacts are provided by residues 11 to 14 (LAAG), Lys25, Gln76, 81 to 82 (GT), 103 to 105 (YGD), Gly140, Glu154, Asn169, and Asn227. Mg(2+) is bound at residue Asp105. Asn227 lines the Mg(2+) pocket. Positions 230–250 (LQLSRLERVYQSEQAEKLLLA) are linker. The N-acetyltransferase stretch occupies residues 251–456 (GVMLRDPARF…EGWRRPVKKK (206 aa)). Residues Arg333 and Lys351 each coordinate UDP-N-acetyl-alpha-D-glucosamine. His363 serves as the catalytic Proton acceptor. The UDP-N-acetyl-alpha-D-glucosamine site is built by Tyr366 and Asn377. Acetyl-CoA-binding positions include Ala380, 386–387 (NY), Ser405, Ala423, and Arg440.

The protein in the N-terminal section; belongs to the N-acetylglucosamine-1-phosphate uridyltransferase family. This sequence in the C-terminal section; belongs to the transferase hexapeptide repeat family. As to quaternary structure, homotrimer. Mg(2+) serves as cofactor.

The protein resides in the cytoplasm. The catalysed reaction is alpha-D-glucosamine 1-phosphate + acetyl-CoA = N-acetyl-alpha-D-glucosamine 1-phosphate + CoA + H(+). The enzyme catalyses N-acetyl-alpha-D-glucosamine 1-phosphate + UTP + H(+) = UDP-N-acetyl-alpha-D-glucosamine + diphosphate. It functions in the pathway nucleotide-sugar biosynthesis; UDP-N-acetyl-alpha-D-glucosamine biosynthesis; N-acetyl-alpha-D-glucosamine 1-phosphate from alpha-D-glucosamine 6-phosphate (route II): step 2/2. The protein operates within nucleotide-sugar biosynthesis; UDP-N-acetyl-alpha-D-glucosamine biosynthesis; UDP-N-acetyl-alpha-D-glucosamine from N-acetyl-alpha-D-glucosamine 1-phosphate: step 1/1. Its pathway is bacterial outer membrane biogenesis; LPS lipid A biosynthesis. In terms of biological role, catalyzes the last two sequential reactions in the de novo biosynthetic pathway for UDP-N-acetylglucosamine (UDP-GlcNAc). The C-terminal domain catalyzes the transfer of acetyl group from acetyl coenzyme A to glucosamine-1-phosphate (GlcN-1-P) to produce N-acetylglucosamine-1-phosphate (GlcNAc-1-P), which is converted into UDP-GlcNAc by the transfer of uridine 5-monophosphate (from uridine 5-triphosphate), a reaction catalyzed by the N-terminal domain. This chain is Bifunctional protein GlmU, found in Shigella boydii serotype 4 (strain Sb227).